A 185-amino-acid polypeptide reads, in one-letter code: Adenine phosphoribosyltransferase (185 aa).

It belongs to the purine/pyrimidine phosphoribosyltransferase family. Homodimer.

It localises to the cytoplasm. It carries out the reaction AMP + diphosphate = 5-phospho-alpha-D-ribose 1-diphosphate + adenine. Its pathway is purine metabolism; AMP biosynthesis via salvage pathway; AMP from adenine: step 1/1. Its function is as follows. Catalyzes a salvage reaction resulting in the formation of AMP, that is energically less costly than de novo synthesis. The sequence is that of Adenine phosphoribosyltransferase from Corynebacterium glutamicum (strain ATCC 13032 / DSM 20300 / JCM 1318 / BCRC 11384 / CCUG 27702 / LMG 3730 / NBRC 12168 / NCIMB 10025 / NRRL B-2784 / 534).